Reading from the N-terminus, the 110-residue chain is PCNA-associated factor (110 aa).

Residue Lys-15 forms a Glycyl lysine isopeptide (Lys-Gly) (interchain with G-Cter in ubiquitin) linkage. A D-box motif is present at residues 23–34; that stretch reads RKVLGSSTFVTN. Lys-24 carries the N6-acetyllysine; alternate modification. Residue Lys-24 forms a Glycyl lysine isopeptide (Lys-Gly) (interchain with G-Cter in ubiquitin); alternate linkage. Position 28 is a phosphoserine (Ser-28). Residues 29 to 39 show a composition bias toward low complexity; that stretch reads STFVTNSSGSS. Residues 29 to 110 form a disordered region; the sequence is STFVTNSSGS…QPDHRDDENE (82 aa). A PIP-box motif is present at residues 61–71; the sequence is QKGIGEFFRLS. Ser-71 bears the Phosphoserine mark. Residues 71 to 80 are compositionally biased toward basic and acidic residues; that stretch reads SPKDSKKENQ. The short motif at 77 to 79 is the KEN box element; it reads KEN. Positions 84–96 match the Initiation motif motif; the sequence is EAGSSGLGKAKRK.

In terms of assembly, interacts (when monoubiquitinated at Lys-15 and Lys-24) with PCNA. Interacts with isoform 2/p33ING1b of ING1. Interacts with BRCA1. Post-translationally, monoubiquitinated at Lys-15 and Lys-24 during normal S phase, promoting its association with PCNA. Also diubiquitinated at these 2 sites. Following DNA damage, monoubiquitin chains at Lys-15 and Lys-24 are probably extended, leading to disrupt the interaction with PCNA. Polyubiquitinated by the APC/C complex at the mitotic exit, leading to its degradation by the proteasome.

Its subcellular location is the nucleus. It is found in the cytoplasm. The protein resides in the perinuclear region. PCNA-binding protein that acts as a regulator of DNA repair during DNA replication. Following DNA damage, the interaction with PCNA is disrupted, facilitating the interaction between monoubiquitinated PCNA and the translesion DNA synthesis DNA polymerase eta (POLH) at stalled replisomes, facilitating the bypass of replication-fork-blocking lesions. Also acts as a regulator of centrosome number. The chain is PCNA-associated factor from Rattus norvegicus (Rat).